The sequence spans 361 residues: 3-dehydroquinate synthase (361 aa).

Residues 107–111 (GVIGD), 131–132 (TS), Lys144, and Lys153 each bind NAD(+). Positions 186, 251, and 268 each coordinate Zn(2+).

The protein belongs to the sugar phosphate cyclases superfamily. Dehydroquinate synthase family. NAD(+) is required as a cofactor. Co(2+) serves as cofactor. Requires Zn(2+) as cofactor.

Its subcellular location is the cytoplasm. It carries out the reaction 7-phospho-2-dehydro-3-deoxy-D-arabino-heptonate = 3-dehydroquinate + phosphate. It functions in the pathway metabolic intermediate biosynthesis; chorismate biosynthesis; chorismate from D-erythrose 4-phosphate and phosphoenolpyruvate: step 2/7. In terms of biological role, catalyzes the conversion of 3-deoxy-D-arabino-heptulosonate 7-phosphate (DAHP) to dehydroquinate (DHQ). The polypeptide is 3-dehydroquinate synthase (Synechocystis sp. (strain ATCC 27184 / PCC 6803 / Kazusa)).